Reading from the N-terminus, the 365-residue chain is tRNA/tmRNA (uracil-C(5))-methyltransferase (365 aa).

Positions 189, 217, 222, 238, and 298 each coordinate S-adenosyl-L-methionine. Cysteine 323 acts as the Nucleophile in catalysis. The active-site Proton acceptor is the glutamate 357.

The protein belongs to the class I-like SAM-binding methyltransferase superfamily. RNA M5U methyltransferase family. TrmA subfamily.

The catalysed reaction is uridine(54) in tRNA + S-adenosyl-L-methionine = 5-methyluridine(54) in tRNA + S-adenosyl-L-homocysteine + H(+). It carries out the reaction uridine(341) in tmRNA + S-adenosyl-L-methionine = 5-methyluridine(341) in tmRNA + S-adenosyl-L-homocysteine + H(+). Functionally, dual-specificity methyltransferase that catalyzes the formation of 5-methyluridine at position 54 (m5U54) in all tRNAs, and that of position 341 (m5U341) in tmRNA (transfer-mRNA). The polypeptide is tRNA/tmRNA (uracil-C(5))-methyltransferase (Shewanella halifaxensis (strain HAW-EB4)).